A 333-amino-acid polypeptide reads, in one-letter code: Serine/threonine-protein phosphatase 4 catalytic subunit 1 (333 aa).

The disordered stretch occupies residues 1–28 (MALACTDSANSTFSRVDSPTSGPSDQLT). Polar residues predominate over residues 7 to 27 (DSANSTFSRVDSPTSGPSDQL). Mn(2+) is bound by residues Asp79, His81, Asp107, and Asn139. Catalysis depends on His140, which acts as the Proton donor. Mn(2+) contacts are provided by His189 and His264. Position 333 is a leucine methyl ester (Leu333).

This sequence belongs to the PPP phosphatase family. PP-4 (PP-X) subfamily. As to quaternary structure, serine/threonine-protein phosphatase 4 (PP4) occurs in different assemblies of the catalytic and one or more regulatory subunits. The regulatory subunits are likely to be ppfr-1, ppfr-2, ppfr-4 and smk-1. Interacts with mei-1. Requires Mn(2+) as cofactor. In terms of processing, methylation at the C-terminal Leu-333 is critical for interactions with regulatory subunits.

It is found in the cytoplasm. The protein localises to the cytoskeleton. The protein resides in the microtubule organizing center. It localises to the centrosome. The enzyme catalyses O-phospho-L-seryl-[protein] + H2O = L-seryl-[protein] + phosphate. It carries out the reaction O-phospho-L-threonyl-[protein] + H2O = L-threonyl-[protein] + phosphate. Its function is as follows. Protein phosphatase which plays an essential role in meiosis and in early embryonic mitosis. During spermatocyte meiosis and the first embryonic mitosis, regulates centrosome maturation, and thus spindle formation, by recruiting some of the components of the pericentriolar material (PCM). During oocyte meiosis I, regulates meiotic chromosome dynamics including synapsis-independent chromosome pairing, restriction of synapsis to homologous chromosomes, programmed DNA double-strand break initiation and crossover formation resulting in chiasma formation. During oocyte meiosis II and probably together with regulatory subunit ppfr-1, may regulate microtubule severing by dephosphorylating and activating mei-1, a component of the katanin microtubule severing complex. In Caenorhabditis elegans, this protein is Serine/threonine-protein phosphatase 4 catalytic subunit 1.